The sequence spans 134 residues: Aspartate 1-decarboxylase (134 aa).

Ser-25 acts as the Schiff-base intermediate with substrate; via pyruvic acid in catalysis. Residue Ser-25 is modified to Pyruvic acid (Ser). Thr-57 provides a ligand contact to substrate. Tyr-58 functions as the Proton donor in the catalytic mechanism. 73 to 75 (GAA) provides a ligand contact to substrate.

It belongs to the PanD family. Heterooctamer of four alpha and four beta subunits. Requires pyruvate as cofactor. Post-translationally, is synthesized initially as an inactive proenzyme, which is activated by self-cleavage at a specific serine bond to produce a beta-subunit with a hydroxyl group at its C-terminus and an alpha-subunit with a pyruvoyl group at its N-terminus.

The protein localises to the cytoplasm. The catalysed reaction is L-aspartate + H(+) = beta-alanine + CO2. It participates in cofactor biosynthesis; (R)-pantothenate biosynthesis; beta-alanine from L-aspartate: step 1/1. Its function is as follows. Catalyzes the pyruvoyl-dependent decarboxylation of aspartate to produce beta-alanine. This is Aspartate 1-decarboxylase from Citrifermentans bemidjiense (strain ATCC BAA-1014 / DSM 16622 / JCM 12645 / Bem) (Geobacter bemidjiensis).